The sequence spans 294 residues: Nucleotide-binding protein CLK_2809 (294 aa).

ATP is bound at residue 8–15 (GLSGAGKT). Position 59-62 (59-62 (DIRG)) interacts with GTP.

It belongs to the RapZ-like family.

In terms of biological role, displays ATPase and GTPase activities. This Clostridium botulinum (strain Loch Maree / Type A3) protein is Nucleotide-binding protein CLK_2809.